A 250-amino-acid polypeptide reads, in one-letter code: Kv channel-interacting protein 4 (250 aa).

Positions 2–44 (NVRRVESISAQLEEASSTGGFLYAQNNTKRSIKERLMKLLPCS) are KIS. 2 positions are modified to phosphoserine: Ser-17 and Ser-56. The EF-hand 1; degenerate domain occupies 61–117 (LEMATVRHRPEALELLEAQSKFTKKELQILYRGFKNECPSGVVNEETFKEIYSQFFP). EF-hand domains lie at 120 to 155 (DSTT…LLRG), 156 to 191 (TVQE…IYDM), and 204 to 239 (APRQ…DENI). Ca(2+) is bound by residues Asp-133, Asp-135, Asn-137, Asp-144, Asp-169, Asn-171, Asp-173, Tyr-175, Glu-180, Asp-217, Asn-219, Asp-221, and Glu-228. Residues 237-250 (ENIMRSMQLFENVI) are interaction with KCND2.

This sequence belongs to the recoverin family. Component of heteromultimeric potassium channels. Identified in potassium channel complexes containing KCND1, KCND2, KCND3, KCNIP1, KCNIP2, KCNIP3, KCNIP4, DPP6 and DPP10. Interacts with the C-terminus of PSEN2 and probably PSEN1. Interacts with KCND2 and KCND3. Expressed in brain. Highly expressed by neurons in layers II-IV of cortex and in hippocampus, thalamus and the Purkinje cell layer of the cerebellum.

The protein resides in the cell membrane. It is found in the cytoplasm. Its subcellular location is the peroxisome. Functionally, regulatory subunit of Kv4/D (Shal)-type voltage-gated rapidly inactivating A-type potassium channels, such as KCND2/Kv4.2 and KCND3/Kv4.3. Modulates channel expression at the cell membrane, gating characteristics, inactivation kinetics and rate of recovery from inactivation in a calcium-dependent and isoform-specific manner. The polypeptide is Kv channel-interacting protein 4 (Kcnip4) (Mus musculus (Mouse)).